Reading from the N-terminus, the 202-residue chain is ATP-dependent Clp protease proteolytic subunit (202 aa).

Serine 101 acts as the Nucleophile in catalysis. Histidine 126 is an active-site residue.

It belongs to the peptidase S14 family. In terms of assembly, component of the chloroplastic Clp protease core complex.

It localises to the plastid. The protein localises to the chloroplast stroma. The catalysed reaction is Hydrolysis of proteins to small peptides in the presence of ATP and magnesium. alpha-casein is the usual test substrate. In the absence of ATP, only oligopeptides shorter than five residues are hydrolyzed (such as succinyl-Leu-Tyr-|-NHMec, and Leu-Tyr-Leu-|-Tyr-Trp, in which cleavage of the -Tyr-|-Leu- and -Tyr-|-Trp bonds also occurs).. Its function is as follows. Cleaves peptides in various proteins in a process that requires ATP hydrolysis. Has a chymotrypsin-like activity. Plays a major role in the degradation of misfolded proteins. This is ATP-dependent Clp protease proteolytic subunit from Nuphar advena (Common spatterdock).